The chain runs to 571 residues: Glutamate--tRNA ligase (571 aa).

Positions 106–116 match the 'HIGH' region motif; it reads PNPDGAFHLGN.

The protein belongs to the class-I aminoacyl-tRNA synthetase family. Glutamate--tRNA ligase type 2 subfamily.

Its subcellular location is the cytoplasm. It carries out the reaction tRNA(Glu) + L-glutamate + ATP = L-glutamyl-tRNA(Glu) + AMP + diphosphate. Functionally, catalyzes the attachment of glutamate to tRNA(Glu) in a two-step reaction: glutamate is first activated by ATP to form Glu-AMP and then transferred to the acceptor end of tRNA(Glu). The protein is Glutamate--tRNA ligase of Pyrococcus abyssi (strain GE5 / Orsay).